Here is a 410-residue protein sequence, read N- to C-terminus: Sulfate adenylyltransferase (410 aa).

It belongs to the sulfate adenylyltransferase family.

The enzyme catalyses sulfate + ATP + H(+) = adenosine 5'-phosphosulfate + diphosphate. Its pathway is sulfur metabolism; hydrogen sulfide biosynthesis; sulfite from sulfate: step 1/3. This Syntrophobacter fumaroxidans (strain DSM 10017 / MPOB) protein is Sulfate adenylyltransferase.